Here is a 131-residue protein sequence, read N- to C-terminus: Small ribosomal subunit protein bS6 (131 aa).

This sequence belongs to the bacterial ribosomal protein bS6 family.

Functionally, binds together with bS18 to 16S ribosomal RNA. This Borrelia hermsii (strain HS1 / DAH) protein is Small ribosomal subunit protein bS6.